A 689-amino-acid chain; its full sequence is DNA ligase (689 aa).

Residues 58–62 (DQEYD), 107–108 (SL), and Glu138 contribute to the NAD(+) site. Lys140 acts as the N6-AMP-lysine intermediate in catalysis. NAD(+) contacts are provided by Arg161, Glu198, Lys314, and Lys338. The Zn(2+) site is built by Cys432, Cys435, Cys448, and Cys453. The BRCT domain occupies 611–689 (ASSGTLSGKT…QELLEMLHGG (79 aa)).

This sequence belongs to the NAD-dependent DNA ligase family. LigA subfamily. Requires Mg(2+) as cofactor. Mn(2+) serves as cofactor.

It catalyses the reaction NAD(+) + (deoxyribonucleotide)n-3'-hydroxyl + 5'-phospho-(deoxyribonucleotide)m = (deoxyribonucleotide)n+m + AMP + beta-nicotinamide D-nucleotide.. In terms of biological role, DNA ligase that catalyzes the formation of phosphodiester linkages between 5'-phosphoryl and 3'-hydroxyl groups in double-stranded DNA using NAD as a coenzyme and as the energy source for the reaction. It is essential for DNA replication and repair of damaged DNA. This is DNA ligase from Methylacidiphilum infernorum (isolate V4) (Methylokorus infernorum (strain V4)).